A 564-amino-acid chain; its full sequence is Urease subunit alpha (564 aa).

Residues 126 to 564 (GGIDTHIHFI…LPMAQRYFLF (439 aa)) form the Urease domain. Ni(2+) contacts are provided by His-131, His-133, and Lys-214. N6-carboxylysine is present on Lys-214. His-216 is a binding site for substrate. Ni(2+) is bound by residues His-243 and His-269. The active-site Proton donor is His-317. Asp-357 contributes to the Ni(2+) binding site.

It belongs to the metallo-dependent hydrolases superfamily. Urease alpha subunit family. Heterotrimer of UreA (gamma), UreB (beta) and UreC (alpha) subunits. Three heterotrimers associate to form the active enzyme. Ni cation serves as cofactor. In terms of processing, carboxylation allows a single lysine to coordinate two nickel ions.

The protein localises to the cytoplasm. It carries out the reaction urea + 2 H2O + H(+) = hydrogencarbonate + 2 NH4(+). It functions in the pathway nitrogen metabolism; urea degradation; CO(2) and NH(3) from urea (urease route): step 1/1. This is Urease subunit alpha from Burkholderia pseudomallei (strain 1710b).